The primary structure comprises 139 residues: uncharacterized protein (139 aa).

The protein to E.coli YebE.

This is an uncharacterized protein from Yersinia enterocolitica.